A 531-amino-acid chain; its full sequence is MSKDYRSLANLSPFELKDELIKVASGKANRLMLNAGRGNPNFLATTPRRAFFRLGLFAAAESELSYSYMTVGVGGLAKLDGIEGRFERFIAEHRDQEGVKFLGKSLSYVRDQLGLDPAAFLHEMVDGILGCNYPVPPRMLTVSEQIVRQYIVREMAGGAVPPESVDLFAVEGGTAAMAYIFESLRISGLLKAGDKVAIGMPVFTPYIEIPELAQYDLKEVPIHADPDNGWQYSDAELDKLKDPDVKIFFCVNPSNPPSVKMDQRSLDRVRAIVAEQRPDLLILTDDVYGTFADEFQSLFSVCPRNTLLVYSFSKYFGATGWRLGVIAAHKDNVFDHALSQLPESAKKALDHRYRSLLPDVRSLKFIDRLVADSRVVALNHTAGLSTPQQVQMVLFSLFALMDEADAYKQALKQLIRRREATLYRELGMPPLENPNSVNYYTLIDLQNVTCRLYGEAFSQWAVQQSSTGDMLFRVADETGIVLLPGRGFGSDRPSGRASLANLNEYEYAAIGRALRRLADELYEQYKALGKE.

The L-aspartate site is built by glycine 114 and asparagine 255. Residue lysine 314 is modified to N6-(pyridoxal phosphate)lysine. Arginine 496 is an L-aspartate binding site.

The protein belongs to the class-I pyridoxal-phosphate-dependent aminotransferase family. As to quaternary structure, homododecamer. Requires pyridoxal 5'-phosphate as cofactor.

It carries out the reaction L-aspartate + H(+) = L-alanine + CO2. The catalysed reaction is L-aspartate + 2-oxoglutarate = oxaloacetate + L-glutamate. Its activity is regulated as follows. Inhibited by 10 mM Co(2+), Mn(2+) and Ni(2+), and by 1 mM Cu(2+) and Hg(2+). Functionally, bifunctional enzyme that has both L-aspartate decarboxylase and transaminase activity. Has high activity with L-aspartate, and much lower activity with D-aspartate, L-lysine and L-glutamine. The chain is Bifunctional aspartate aminotransferase and L-aspartate beta-decarboxylase from Pseudomonas sp.